Consider the following 82-residue polypeptide: uncharacterized protein (82 aa).

Functionally, this protein may be involved in virus assembly. This is an uncharacterized protein from Sulfolobus spindle-shape virus 1 (SSV1).